The primary structure comprises 258 residues: Imidazole glycerol phosphate synthase subunit HisF (258 aa).

Active-site residues include Asp11 and Asp130.

It belongs to the HisA/HisF family. As to quaternary structure, heterodimer of HisH and HisF.

It is found in the cytoplasm. The catalysed reaction is 5-[(5-phospho-1-deoxy-D-ribulos-1-ylimino)methylamino]-1-(5-phospho-beta-D-ribosyl)imidazole-4-carboxamide + L-glutamine = D-erythro-1-(imidazol-4-yl)glycerol 3-phosphate + 5-amino-1-(5-phospho-beta-D-ribosyl)imidazole-4-carboxamide + L-glutamate + H(+). Its pathway is amino-acid biosynthesis; L-histidine biosynthesis; L-histidine from 5-phospho-alpha-D-ribose 1-diphosphate: step 5/9. Its function is as follows. IGPS catalyzes the conversion of PRFAR and glutamine to IGP, AICAR and glutamate. The HisF subunit catalyzes the cyclization activity that produces IGP and AICAR from PRFAR using the ammonia provided by the HisH subunit. The protein is Imidazole glycerol phosphate synthase subunit HisF of Methylobacterium nodulans (strain LMG 21967 / CNCM I-2342 / ORS 2060).